The sequence spans 71 residues: Mitotic-spindle organizing protein 1B (71 aa).

The protein belongs to the MOZART1 family. As to quaternary structure, homo- and heteromultimer. Part of the gamma-tubulin complex. Interacts with TUBB2/TUBB3, GIP2, GCP3 and TSA1 (via C-terminal domain). In terms of tissue distribution, mostly expressed in siliques and flowers, and, to a lower extent, in leaves, roots and seedlings, with highest levels in young tissues and meristematic cells, and the vasculature.

The protein resides in the cytoplasm. It localises to the cytoskeleton. The protein localises to the microtubule organizing center. Its subcellular location is the spindle. It is found in the nucleus. The protein resides in the phragmoplast. It localises to the nucleus envelope. Required for gamma-tubulin complex recruitment to the microtubule organizing centers (MTOCs). During mitosis, modulates gamma-tubulin complex localization, spindle stability and chromosomal segregation. Necessary for gametophyte development and embryogenesis. This Arabidopsis thaliana (Mouse-ear cress) protein is Mitotic-spindle organizing protein 1B (GIP1).